The sequence spans 236 residues: Small ribosomal subunit protein uS2c (236 aa).

This sequence belongs to the universal ribosomal protein uS2 family.

It localises to the plastid. In Cuscuta gronovii (Common dodder), this protein is Small ribosomal subunit protein uS2c (rps2).